The following is a 57-amino-acid chain: Mambaquaretin-1 (57 aa).

The 51-residue stretch at 5–55 (CNLPVKPGPCNGFFSAFYYSQKTNKCHSFTYGGCKGNANRFSTIEKCRRTC) folds into the BPTI/Kunitz inhibitor domain. Cystine bridges form between Cys5–Cys55, Cys14–Cys38, and Cys30–Cys51. Residues 15–16 (NG) form an important for binding V2R region.

It belongs to the venom Kunitz-type family. In terms of tissue distribution, expressed by the venom gland.

It localises to the secreted. In terms of biological role, selectively interacts with vasopressin V2 receptor (V2R/AVPR2) and fully inhibits three major signaling pathways of this receptor that are GalphaS protein, the interaction with beta-arrestin and activation of MAP kinase. Inhibits vasopressin binding human V2R in the nanomolar range (Ki=5.02 nM), and also potently inhibits vasopressin-induced cAMP production (IC(50)=94 nM). In vivo, this protein shows an aquaretic effect. Urine output increases and urine osmolality decreases dramatically under treatment with this protein, without differences observed between healthy mice and the pcy mice model of the autosomal-dominant polycystic kidney disease (ADPKD). This protein does not modify electrolyte, protein and urea excretions in the urine samples, but produces a 3-fold decrease of creatinine levels. Intraperitoneal injection of this protein into the pcy mice significantly reduces the number of renal cysts and the total area of cysts. This protein also shows high efficacy in preventing hyponatremia in rat models (induced by DAVP). Is highly visible in mice liver and kidney after intravenous injection. Is rapidly eliminated in the liver, whereas it exhibits slow elimination in the kidney due to the high expression of V2R which acts as a reservoir. In addition, its elimination from blood is rapid. Fluorescent MQ1 probes could also be used for imaging V2R-overexpressing cancer cells; note that these probes label the three renal cancer cell lines CAKI-2, ACHN and A498 that highly express V2R. In vivo, does not show any toxicity on animals, even at highest doses tested, such as prostration, spidy coat, appetite or weight loss. This Dendroaspis angusticeps (Eastern green mamba) protein is Mambaquaretin-1.